Reading from the N-terminus, the 494-residue chain is Cobyric acid synthase (494 aa).

The GATase cobBQ-type domain maps to 248–444 (EIEIAIIKLP…LHGIFENDEW (197 aa)). The active-site Nucleophile is C329. H436 is an active-site residue.

Belongs to the CobB/CobQ family. CobQ subfamily.

It participates in cofactor biosynthesis; adenosylcobalamin biosynthesis. Its function is as follows. Catalyzes amidations at positions B, D, E, and G on adenosylcobyrinic A,C-diamide. NH(2) groups are provided by glutamine, and one molecule of ATP is hydrogenolyzed for each amidation. This Prochlorococcus marinus (strain NATL1A) protein is Cobyric acid synthase.